The primary structure comprises 203 residues: Twist-related protein 1 (203 aa).

The segment covering 1–18 has biased composition (low complexity); sequence MMQDVSSSPVSPADDSLS. Residues 1–107 are disordered; the sequence is MMQDVSSSPV…GGSPQSCEEL (107 aa). The span at 34–43 shows a compositional bias: basic residues; sequence RGGRKRRSSR. Gly residues-rich tracts occupy residues 46–65 and 80–100; these read AGGG…GGDE and GCGG…GGGS. The bHLH domain occupies 109–160; it reads TQRVMANVRERQRTQSLNEPFAALRKIIPTLPSDKLSKIQTLKLAARYIDFL. Positions 162–192 are sufficient for transactivation activity; the sequence is RVLQSDELDSKTASCSYVAHEWLSYAFSVWR.

Efficient DNA binding requires dimerization with another bHLH protein. Homodimer or heterodimer with E proteins such as TCF3. ID1 binds preferentially to TCF3 but does not interact efficiently with TWIST1 so ID1 levels control the amount of TCF3 available to dimerize with TWIST and thus determine the type of dimer formed.

The protein resides in the nucleus. Functionally, acts as a transcriptional regulator. Inhibits myogenesis by sequestrating E proteins, inhibiting trans-activation by MEF2, and inhibiting DNA-binding by MYOD1 through physical interaction. This interaction probably involves the basic domains of both proteins. Also represses expression of pro-inflammatory cytokines such as TNFA and IL1B. Regulates cranial suture patterning and fusion. Activates transcription as a heterodimer with E proteins. Regulates gene expression differentially, depending on dimer composition. Homodimers induce expression of FGFR2 and POSTN while heterodimers repress FGFR2 and POSTN expression and induce THBS1 expression. Heterodimerization is also required for osteoblast differentiation. Represses the activity of the circadian transcriptional activator: NPAS2-BMAL1 heterodimer. This is Twist-related protein 1 (TWIST1) from Gorilla gorilla gorilla (Western lowland gorilla).